Here is a 358-residue protein sequence, read N- to C-terminus: Mesaconyl-CoA hydratase (358 aa).

The region spanning 44–148 is the MaoC-like domain; the sequence is AHDPGLRLTH…TSSSRPQYGI (105 aa).

This sequence belongs to the enoyl-CoA hydratase/isomerase family.

The catalysed reaction is (2R,3S)-beta-methylmalyl-CoA = 2-methylfumaryl-CoA + H2O. Involved in the methylaspartate cycle. Catalyzes the reversible hydration of mesaconyl-CoA (2-methylfumaryl-CoA) to yield beta-methylmalyl-CoA ((2R,3S)-beta-methylmalyl-CoA). The polypeptide is Mesaconyl-CoA hydratase (Haloarcula marismortui (strain ATCC 43049 / DSM 3752 / JCM 8966 / VKM B-1809) (Halobacterium marismortui)).